Here is a 453-residue protein sequence, read N- to C-terminus: 5-hydroxytryptamine receptor 1 (453 aa).

Residues 1-36 (MKSLKSSTHDVPHPEHVVWAPPAYDEQHHLFFSHGT) are Extracellular-facing. The helical transmembrane segment at 37–57 (VLIGIVGSLIITVAVVGNVLV) threads the bilayer. At 58–74 (CLAIFTEPILSHSKSNF) the chain is on the cytoplasmic side. The chain crosses the membrane as a helical span at residues 75–94 (FIVSLAVADLLLALLVMTFA). The Extracellular segment spans residues 95 to 110 (LVNDMYGYWLFGETFC). Cysteine 110 and cysteine 225 are joined by a disulfide. A helical membrane pass occupies residues 111–133 (FIWMSADVMCETASIFSICVISY). The Cytoplasmic portion of the chain corresponds to 134 to 153 (DRLKQVQKPLHYEEFMTTTR). A helical transmembrane segment spans residues 154–175 (ALLIIACLWICSFVLSFVPIFL). Residues 176–223 (EWHELSVEEIKAIFKDNKTEKEKALEAHNFSSALNQTLGDNQKSNAKH) lie on the Extracellular side of the membrane. A helical transmembrane segment spans residues 224–244 (VCLFDVHFTYSVIYSFICFYV). The Cytoplasmic portion of the chain corresponds to 245–301 (PCTLMLTNYLRLFLIAQTHQVRIRSLQMTNPPQLRGQGASSYRNQGTQGSKAARTLT). A helical membrane pass occupies residues 302 to 322 (IITGTFLACWLPFFIINPIAA). At 323-331 (ADEHLIPLE) the chain is on the extracellular side. The chain crosses the membrane as a helical span at residues 332-352 (CFMVTIWLGYFNSSVNPIIYG). The Cytoplasmic segment spans residues 353 to 453 (TSNSKFRAAF…VFDSDTAFSS (101 aa)). Positions 397 to 428 (DLSSSEHPSDACDTGRGKNSKGGDCATADPTK) are disordered. The span at 403–412 (HPSDACDTGR) shows a compositional bias: basic and acidic residues.

It belongs to the G-protein coupled receptor 1 family. Reproductive system.

It localises to the cell membrane. Functionally, this is one of the several different receptors for 5-hydroxytryptamine (serotonin). 5-HT plays important roles in various behavioral and physiological processes in aplysia. These include feeding, locomotion, circadian rhythm, learning and memory, synaptic plasticity, and synaptic growth. This receptor is mediated by G proteins that stimulate phospholipase C. This Aplysia californica (California sea hare) protein is 5-hydroxytryptamine receptor 1 (5HTB1).